Here is a 397-residue protein sequence, read N- to C-terminus: 8-amino-7-oxononanoate synthase (397 aa).

R23 lines the substrate pocket. 110-111 contributes to the pyridoxal 5'-phosphate binding site; sequence GY. Substrate is bound at residue H135. Pyridoxal 5'-phosphate-binding residues include S181, H209, and T237. K240 carries the N6-(pyridoxal phosphate)lysine modification. T354 lines the substrate pocket.

It belongs to the class-II pyridoxal-phosphate-dependent aminotransferase family. BioF subfamily. Homodimer. Pyridoxal 5'-phosphate is required as a cofactor.

It catalyses the reaction 6-carboxyhexanoyl-[ACP] + L-alanine + H(+) = (8S)-8-amino-7-oxononanoate + holo-[ACP] + CO2. It participates in cofactor biosynthesis; biotin biosynthesis. Catalyzes the decarboxylative condensation of pimeloyl-[acyl-carrier protein] and L-alanine to produce 8-amino-7-oxononanoate (AON), [acyl-carrier protein], and carbon dioxide. This Anaeromyxobacter dehalogenans (strain 2CP-C) protein is 8-amino-7-oxononanoate synthase.